The chain runs to 224 residues: Envelope glycoprotein L (224 aa).

An N-terminal signal peptide occupies residues 1–22 (MGILGWVGLIAVGVLCVRGGLS). The interaction with gH stretch occupies residues 20–161 (GLSSTEYVIR…FDYSRTRRCV (142 aa)). An interaction with gL region spans residues 20–161 (GLSSTEYVIR…FDYSRTRRCV (142 aa)). The 179-residue stretch at 23-201 (STEYVIRSRV…LTTPPPIIAT (179 aa)) folds into the gL alphaherpesvirus-type domain. 2 disulfide bridges follow: cysteine 44–cysteine 76 and cysteine 149–cysteine 160. The interval 161–224 (VGRQDLGPTN…RRRRPHSRRL (64 aa)) is disordered. A glycan (N-linked (GlcNAc...) asparagine; by host) is linked at asparagine 170. Residues 213-224 (KSRRRRPHSRRL) show a composition bias toward basic residues.

Belongs to the herpesviridae glycoprotein L (gL) family. Alphaherpesvirinae gL subfamily. Interacts with glycoprotein H (gH); this interaction is necessary for the correct processing and cell surface expression of gH. The heterodimer gH/gL seems to interact with gB trimers during fusion. N-glycosylated, O-glycosylated, and sialylated.

It is found in the virion membrane. Its subcellular location is the host cell membrane. The protein resides in the host Golgi apparatus. The protein localises to the host trans-Golgi network. Its function is as follows. The heterodimer glycoprotein H-glycoprotein L is required for the fusion of viral and plasma membranes leading to virus entry into the host cell. Acts as a functional inhibitor of gH and maintains gH in an inhibited form. Upon binding to host integrins, gL dissociates from gH leading to activation of the viral fusion glycoproteins gB and gH. The protein is Envelope glycoprotein L of Human herpesvirus 1 (strain KOS) (HHV-1).